The chain runs to 428 residues: 4-hydroxy-3-methylbut-2-en-1-yl diphosphate synthase (flavodoxin) (428 aa).

Positions 315, 318, 361, and 368 each coordinate [4Fe-4S] cluster.

It belongs to the IspG family. It depends on [4Fe-4S] cluster as a cofactor.

The enzyme catalyses (2E)-4-hydroxy-3-methylbut-2-enyl diphosphate + oxidized [flavodoxin] + H2O + 2 H(+) = 2-C-methyl-D-erythritol 2,4-cyclic diphosphate + reduced [flavodoxin]. The protein operates within isoprenoid biosynthesis; isopentenyl diphosphate biosynthesis via DXP pathway; isopentenyl diphosphate from 1-deoxy-D-xylulose 5-phosphate: step 5/6. Functionally, converts 2C-methyl-D-erythritol 2,4-cyclodiphosphate (ME-2,4cPP) into 1-hydroxy-2-methyl-2-(E)-butenyl 4-diphosphate. In Ralstonia pickettii (strain 12J), this protein is 4-hydroxy-3-methylbut-2-en-1-yl diphosphate synthase (flavodoxin).